Reading from the N-terminus, the 382-residue chain is MSIYTRPVMLLLSGLLLLTLAIAVLNTLVPLWLAHEHLPTWQVGMVSSSYFTGNLVGTLLTGYLIKRLGFNRSYYLASLVFAAGCLGLGLMIGFWSWMAWRFVAGVGCAMIWVVVESALMCSGTSRNRGRLLAAYMMIYYVGTFLGQLLVSKVSTELMNVLPWVTALILAGILPLLFTRILSQQTESRKTTSITSMLKLRQARLGVNGCIISGIVLGSLYGLMPLYLNHQGISNSNIGFWMAVLVSAGIVGQWPIGRLADKFGRLLVLRVQIFVVILGSIAMLTHTAMAPALFILGAAGFTLYPVAMAWSCEKVSQDQLVAMNQALLLSYTIGSLLGPSFTAMLMQHYSDNLLFIMIASVSFIYLLMLLRNARHTSNPVAHV.

Helical transmembrane passes span 14–34 (GLLLLTLAIAVLNTLVPLWLA), 45–65 (MVSSSYFTGNLVGTLLTGYLI), 79–99 (LVFAAGCLGLGLMIGFWSWMA), 102–122 (FVAGVGCAMIWVVVESALMCS), 131–151 (LLAAYMMIYYVGTFLGQLLVS), 157–177 (LMNVLPWVTALILAGILPLLF), 204–224 (LGVNGCIISGIVLGSLYGLMP), 236–256 (NIGFWMAVLVSAGIVGQWPIG), 265–285 (LLVLRVQIFVVILGSIAMLTH), 289–309 (APALFILGAAGFTLYPVAMAW), 325–345 (ALLLSYTIGSLLGPSFTAMLM), and 349–369 (SDNLLFIMIASVSFIYLLMLL).

This sequence belongs to the major facilitator superfamily. YcaD (TC 2.A.1.26) family.

Its subcellular location is the cell inner membrane. This is an uncharacterized protein from Escherichia fergusonii (strain ATCC 35469 / DSM 13698 / CCUG 18766 / IAM 14443 / JCM 21226 / LMG 7866 / NBRC 102419 / NCTC 12128 / CDC 0568-73).